The primary structure comprises 93 residues: Small ribosomal subunit protein uS19c (93 aa).

It belongs to the universal ribosomal protein uS19 family.

It is found in the plastid. It localises to the chloroplast. Functionally, protein S19 forms a complex with S13 that binds strongly to the 16S ribosomal RNA. This Tetradesmus obliquus (Green alga) protein is Small ribosomal subunit protein uS19c.